Reading from the N-terminus, the 537-residue chain is Glutamyl-tRNA(Gln) amidotransferase subunit B, chloroplastic/mitochondrial (537 aa).

This sequence belongs to the GatB/GatE family. GatB subfamily. In terms of assembly, subunit of the heterotrimeric GatCAB amidotransferase (AdT) complex, composed of A, B and C subunits.

The protein localises to the mitochondrion. The protein resides in the plastid. Its subcellular location is the chloroplast. It catalyses the reaction L-glutamyl-tRNA(Gln) + L-glutamine + ATP + H2O = L-glutaminyl-tRNA(Gln) + L-glutamate + ADP + phosphate + H(+). Allows the formation of correctly charged Gln-tRNA(Gln) through the transamidation of misacylated Glu-tRNA(Gln) in chloroplasts and mitochondria. The reaction takes place in the presence of glutamine and ATP through an activated gamma-phospho-Glu-tRNA(Gln). The polypeptide is Glutamyl-tRNA(Gln) amidotransferase subunit B, chloroplastic/mitochondrial (Ostreococcus tauri).